Consider the following 455-residue polypeptide: T-box protein VegT-A (455 aa).

Disordered stretches follow at residues 21–40 (SNCA…SSQD), 229–262 (REQE…DSPE), and 295–346 (ANQG…EPSS). Positions 57 to 230 (LWSQFHQEGT…HNPFAKGFRE (174 aa)) form a DNA-binding region, T-box. Positions 229–241 (REQERSHKRDDVL) are enriched in basic and acidic residues. Residues 308 to 324 (GANQEQQVPTSSSNFYN) are compositionally biased toward polar residues.

As to quaternary structure, forms a repression complex on the promoters of the nodal/nr1 and siamois genes with the maternal factors tcf7l1/tcf3 and pouf5.1/oct-25. Interacts (via C-terminus) with tcf7l1/tcf3 (via N-terminus). Also interacts with the other POU-domain transcription factors pou5f1.2/oct-91 and pou5f1.3/oct-60. Uniformly distributed in stage I oocytes but becomes localized to the vegetal hemisphere by stage II and remains so thereafter throughout oogenesis and the early embryonic cleavage stages. Zygotic expression parallels blastopore formation and shifts from dorsal expression in the marginal zone of late blastula and early gastrula stages to a ventral/lateral expression at the posterior end of later stage embryos. Expression is excluded from the notochord. In tailbud and tadpole stages, expressed exclusively in a subset of posterior Rohon-Beard neurons.

The protein resides in the nucleus. In terms of biological role, transcription factor required for both mesoderm and endoderm formation in the embryo; signaling determinants and concentration levels may determine which germ layer is formed. Acts together with beta-catenin to activate genes that are responsible for mesoderm induction including wnt-8, eomes t/bra, siamois, mix1 and sox17. Directly binds to promoter DNA. Patterns the mesoderm along the dorsoventral and posterior axis. Activates siamois gene transcription when alone or in combination with beta-catenin, but inhibits siamois transcription in combination with pou5f1.1/oct-25. The polypeptide is T-box protein VegT-A (vegt-a) (Xenopus laevis (African clawed frog)).